The chain runs to 983 residues: MQVDPVVYQLQRAVSQDPIAVKDAEGHLNNWKKEPGFFGKLYSIFLDKQNDMSLRWIAIIQLRNSIDIIWRKNTKMSLLPEERDFIRCNALLGSIKSENLLSIQNALVVSRIARLDYPTEWPSLFHDLLGKLQQSLGTGDYDVALRLLITLHHIIKAMAGNRLLRSRQIFYKLAPELLTILQPILHSSLSSWMMILESSKEIKDSTLLSYMQISRYTLKACRRLVVFGFQNPSESEFSERMLAFCAVHQRKLLSMLGTMLQSSRSPIVVGECLEMAFAHAFLFNKPFFDFSFYSPCLTKFPATIDYISLHYDFLGQISSHLSSYKEKFEESSKNFEKLVIMSLRVFILVIQEFCNTKSSHPETAQVLYNSFLVDNRINNLLDLLITKLLILKEEDFEEWTDSPQQWVLEQSTQDVEFNVRPCAEKLLKCFFDAYGDIIVSPFKDMIYSVFECPKTLTQAVQQDTLISSFGVGYTQLKSIFPFAKWLQEAAVPNMASINDIGISRVYRRRIAIFLSQWIEDSSSEQLLEVIYKLYCSFLNLTDPCNDAVVILTTIDAFKTVLDDWNFSENSFLSIKENLFVHVLSLFKAFESVDARTSILSLLGTLLARAGEHVAPMESTIASLLSQLWDGWKKEPLLRARVLAVMHQFVNAIKAKSFEFSTFLYTVIEYCVNPESPEHVIFEADAMELWSTFLMYIQKLPETFTLLIPHLLYHLSQATSTLPFVLMIVSSYQLLDNTVLMKDYSFTIFEKLNDLLDDVKNETLQALCKTVCLLIETTPMDMIYESLLNSSLLSRLLLSIATNDKHPQVLIEYLLVVSRISLREPELILKVCQTKNINIAMLIGNWILLNDHINHSKDRKLNTLALSSLLRTNHPDVLAVLDSIMNLWFSVLSEVEEDANGDATIYYKNDDYSAVGFYLDETSEEMTRRKQLLLKDPVHSVNSRSFFISVFMFCRDANGGMENFQNQYLSTVNPALLEQFQSML.

The Importin N-terminal domain maps to 24-96; the sequence is AEGHLNNWKK…RCNALLGSIK (73 aa).

This sequence belongs to the importin beta family.

It is found in the nucleus. Functions as a component of the nuclear pore complex (NPC). NPC components, collectively referred to as nucleoporins (NUPs), can play the role of both NPC structural components and of docking or interaction partners for transiently associated nuclear transport factors. Active directional transport is assured by both, a Phe-Gly (FG) repeat affinity gradient for these transport factors across the NPC and a transport cofactor concentration gradient across the nuclear envelope. Involved in the export of mRNA from the nucleus to the cytoplasm. May play a role in mitotic spindle formation and/or function. The protein is Importin beta-like protein kap113 (kap113) of Schizosaccharomyces pombe (strain 972 / ATCC 24843) (Fission yeast).